Consider the following 942-residue polypeptide: PH and SEC7 domain-containing protein C11E3.11c (942 aa).

Positions 1–18 are enriched in polar residues; that stretch reads MSRNASNAYLKNGNSTPS. Disordered stretches follow at residues 1 to 128 and 259 to 308; these read MSRN…TRLN and SRNL…ETTR. Low complexity predominate over residues 24 to 40; that stretch reads PSSLSQRSKTSTRSSKP. Polar residues-rich tracts occupy residues 50–60, 90–125, 271–284, and 292–305; these read WFKNESSSRHP, ASMSTNDLPSHPRSQSVMGFSSSTSQLTGTSNSSRT, YGNSRTPLRDSSNY, and NRQSSLSIPKSTSE. An SEC7 domain is found at 295–497; the sequence is SSLSIPKSTS…LSSYKSFASN (203 aa). In terms of domain architecture, PH spans 681-804; that stretch reads PYIKQGILKF…WIDALNYWAA (124 aa).

This is PH and SEC7 domain-containing protein C11E3.11c from Schizosaccharomyces pombe (strain 972 / ATCC 24843) (Fission yeast).